Reading from the N-terminus, the 114-residue chain is NLP effector protein 1 (114 aa).

This sequence belongs to the Necrosis inducing protein (NPP1) family.

The protein resides in the secreted. It localises to the host cytoplasm. Functionally, probable secreted effector that may act as a pathogen-associated molecular pattern (PAMP) recognized by the plant immune system. Seems not to induce necrosis, neither in several susceptible or resistant Vitis species nor in the dicot model plant Nicotiana benthamiana. The chain is NLP effector protein 1 from Plasmopara viticola (Downy mildew of grapevine).